Here is a 463-residue protein sequence, read N- to C-terminus: Glycine--tRNA ligase (463 aa).

Substrate is bound by residues arginine 98 and glutamate 174. Residues 206–208 (RNE), 216–221 (FRTREF), 290–291 (EL), and 334–337 (GADR) contribute to the ATP site. Residue 221–225 (FEQME) coordinates substrate. Residue 330 to 334 (EPSLG) participates in substrate binding.

Belongs to the class-II aminoacyl-tRNA synthetase family. As to quaternary structure, homodimer.

It localises to the cytoplasm. It carries out the reaction tRNA(Gly) + glycine + ATP = glycyl-tRNA(Gly) + AMP + diphosphate. Catalyzes the attachment of glycine to tRNA(Gly). The protein is Glycine--tRNA ligase of Staphylococcus aureus (strain Mu50 / ATCC 700699).